The following is a 427-amino-acid chain: Serine hydroxymethyltransferase (427 aa).

Glycine 120 to isoleucine 122 contacts (6S)-5,6,7,8-tetrahydrofolate. Lysine 226 is modified (N6-(pyridoxal phosphate)lysine).

Belongs to the SHMT family. As to quaternary structure, homodimer. Pyridoxal 5'-phosphate is required as a cofactor.

It localises to the cytoplasm. Its pathway is amino-acid biosynthesis; glycine biosynthesis; glycine from L-serine: step 1/1. Catalyzes the reversible interconversion of serine and glycine with a modified folate serving as the one-carbon carrier. Also exhibits a pteridine-independent aldolase activity toward beta-hydroxyamino acids, producing glycine and aldehydes, via a retro-aldol mechanism. The chain is Serine hydroxymethyltransferase from Pyrococcus abyssi (strain GE5 / Orsay).